The primary structure comprises 399 residues: Leu/Ile/Val-binding protein homolog 7 (399 aa).

The N-terminal stretch at 1-22 is a signal peptide; that stretch reads MEKHLIALSVAALQAGAAPASA.

Belongs to the leucine-binding protein family.

Its function is as follows. Component of an amino-acid transport system. The chain is Leu/Ile/Val-binding protein homolog 7 from Brucella abortus (strain 2308).